A 529-amino-acid chain; its full sequence is tRNA pseudouridine synthase Pus10 (529 aa).

Residues Cys-21 and Cys-24 each contribute to the Zn(2+) site. Residues 42-89 (KELLNELQKFLETEKDELILEVMNPPPKKIRLQELEDSIDNLSQNGEG) are a coiled coil. Phosphoserine occurs at positions 79 and 84. Positions 109 and 112 each coordinate Zn(2+). The segment at 304–317 (TPWIIDGERKLESS) is RNA binding forefinger loop. Asp-344 functions as the Nucleophile in the catalytic mechanism. Residues 442–457 (QKTPLRVLHRRPLAVR) form an RNA binding thumb loop region.

It belongs to the pseudouridine synthase Pus10 family. In terms of assembly, interacts with components of the microprocessor complex DROSHA and DGCR8. Proteolytically cleaved during TRAIL-induced cell death. Cleaved, in vitro, either by caspase-3 (CASP3) or caspase-8 (CASP8).

The protein localises to the nucleus. It localises to the cytoplasm. The protein resides in the mitochondrion. The enzyme catalyses uridine(55) in tRNA = pseudouridine(55) in tRNA. It catalyses the reaction uridine(54) in tRNA = pseudouridine(54) in tRNA. In terms of biological role, protein with different functions depending on its subcellular location: involved in miRNA processing in the nucleus and acts as a tRNA pseudouridylate synthase in the cytoplasm. In the cytoplasm, acts as a pseudouridylate synthase by catalyzing synthesis of pseudouridine(54) and pseudouridine(55) from uracil-54 and uracil-55, respectively, in the psi GC loop of a subset of tRNAs. tRNA pseudouridylate synthase activity is enhanced by the presence of 1-methyladenosine at position 53-61 of tRNAs. Does not show tRNA pseudouridylate synthase activity in the nucleus. In the nucleus, promotes primary microRNAs (pri-miRNAs) processing independently of its RNA pseudouridylate synthase activity. Binds pri-miRNAs. Modulator of TRAIL/TNFSF10-induced cell death via activation of procaspase-8 and BID cleavage. Required for the progression of the apoptotic signal through intrinsic mitochondrial cell death. This is tRNA pseudouridine synthase Pus10 from Homo sapiens (Human).